Here is a 206-residue protein sequence, read N- to C-terminus: Pyridoxine/pyridoxamine 5'-phosphate oxidase (206 aa).

FMN is bound by residues Arg-54–Lys-59, Tyr-69–Thr-70, Arg-75, Lys-76, and Gln-98. Lys-59 contributes to the substrate binding site. 3 residues coordinate substrate: Tyr-116, Arg-120, and Ser-124. Residues Gln-133–Ser-134 and Trp-178 contribute to the FMN site. Arg-184 to His-186 lines the substrate pocket. Arg-188 contributes to the FMN binding site.

Belongs to the pyridoxamine 5'-phosphate oxidase family. As to quaternary structure, homodimer. The cofactor is FMN.

It catalyses the reaction pyridoxamine 5'-phosphate + O2 + H2O = pyridoxal 5'-phosphate + H2O2 + NH4(+). It carries out the reaction pyridoxine 5'-phosphate + O2 = pyridoxal 5'-phosphate + H2O2. It participates in cofactor metabolism; pyridoxal 5'-phosphate salvage; pyridoxal 5'-phosphate from pyridoxamine 5'-phosphate: step 1/1. Its pathway is cofactor metabolism; pyridoxal 5'-phosphate salvage; pyridoxal 5'-phosphate from pyridoxine 5'-phosphate: step 1/1. Functionally, catalyzes the oxidation of either pyridoxine 5'-phosphate (PNP) or pyridoxamine 5'-phosphate (PMP) into pyridoxal 5'-phosphate (PLP). The protein is Pyridoxine/pyridoxamine 5'-phosphate oxidase of Anaplasma phagocytophilum (strain HZ).